Reading from the N-terminus, the 110-residue chain is Large ribosomal subunit protein uL22 (110 aa).

Belongs to the universal ribosomal protein uL22 family. As to quaternary structure, part of the 50S ribosomal subunit.

Its function is as follows. This protein binds specifically to 23S rRNA; its binding is stimulated by other ribosomal proteins, e.g. L4, L17, and L20. It is important during the early stages of 50S assembly. It makes multiple contacts with different domains of the 23S rRNA in the assembled 50S subunit and ribosome. In terms of biological role, the globular domain of the protein is located near the polypeptide exit tunnel on the outside of the subunit, while an extended beta-hairpin is found that lines the wall of the exit tunnel in the center of the 70S ribosome. This chain is Large ribosomal subunit protein uL22, found in Shewanella loihica (strain ATCC BAA-1088 / PV-4).